A 363-amino-acid polypeptide reads, in one-letter code: UDP-N-acetylglucosamine--N-acetylmuramyl-(pentapeptide) pyrophosphoryl-undecaprenol N-acetylglucosamine transferase (363 aa).

UDP-N-acetyl-alpha-D-glucosamine contacts are provided by residues 14–16 (TGG), arginine 171, serine 200, and glutamine 290.

This sequence belongs to the glycosyltransferase 28 family. MurG subfamily.

The protein resides in the cell inner membrane. The enzyme catalyses di-trans,octa-cis-undecaprenyl diphospho-N-acetyl-alpha-D-muramoyl-L-alanyl-D-glutamyl-meso-2,6-diaminopimeloyl-D-alanyl-D-alanine + UDP-N-acetyl-alpha-D-glucosamine = di-trans,octa-cis-undecaprenyl diphospho-[N-acetyl-alpha-D-glucosaminyl-(1-&gt;4)]-N-acetyl-alpha-D-muramoyl-L-alanyl-D-glutamyl-meso-2,6-diaminopimeloyl-D-alanyl-D-alanine + UDP + H(+). Its pathway is cell wall biogenesis; peptidoglycan biosynthesis. Its function is as follows. Cell wall formation. Catalyzes the transfer of a GlcNAc subunit on undecaprenyl-pyrophosphoryl-MurNAc-pentapeptide (lipid intermediate I) to form undecaprenyl-pyrophosphoryl-MurNAc-(pentapeptide)GlcNAc (lipid intermediate II). This Borrelia garinii subsp. bavariensis (strain ATCC BAA-2496 / DSM 23469 / PBi) (Borreliella bavariensis) protein is UDP-N-acetylglucosamine--N-acetylmuramyl-(pentapeptide) pyrophosphoryl-undecaprenol N-acetylglucosamine transferase.